A 370-amino-acid polypeptide reads, in one-letter code: Uroporphyrinogen decarboxylase (370 aa).

Substrate contacts are provided by residues 29–33 (RQAGR), aspartate 79, tyrosine 155, serine 210, and histidine 342.

Belongs to the uroporphyrinogen decarboxylase family. In terms of assembly, homodimer.

It is found in the cytoplasm. The enzyme catalyses uroporphyrinogen III + 4 H(+) = coproporphyrinogen III + 4 CO2. It participates in porphyrin-containing compound metabolism; protoporphyrin-IX biosynthesis; coproporphyrinogen-III from 5-aminolevulinate: step 4/4. Catalyzes the decarboxylation of four acetate groups of uroporphyrinogen-III to yield coproporphyrinogen-III. In Delftia acidovorans (strain DSM 14801 / SPH-1), this protein is Uroporphyrinogen decarboxylase.